The following is a 287-amino-acid chain: Bifunctional protein FolD (287 aa).

NADP(+) is bound by residues 166-168 (GAS) and Ile-232.

It belongs to the tetrahydrofolate dehydrogenase/cyclohydrolase family. In terms of assembly, homodimer.

The catalysed reaction is (6R)-5,10-methylene-5,6,7,8-tetrahydrofolate + NADP(+) = (6R)-5,10-methenyltetrahydrofolate + NADPH. It catalyses the reaction (6R)-5,10-methenyltetrahydrofolate + H2O = (6R)-10-formyltetrahydrofolate + H(+). The protein operates within one-carbon metabolism; tetrahydrofolate interconversion. Its function is as follows. Catalyzes the oxidation of 5,10-methylenetetrahydrofolate to 5,10-methenyltetrahydrofolate and then the hydrolysis of 5,10-methenyltetrahydrofolate to 10-formyltetrahydrofolate. This Pectobacterium carotovorum subsp. carotovorum (strain PC1) protein is Bifunctional protein FolD.